The sequence spans 293 residues: NAD kinase (293 aa).

D74 serves as the catalytic Proton acceptor. NAD(+)-binding positions include 74 to 75 (DG), 148 to 149 (NE), H159, R176, D178, T186, 189 to 194 (TAYSLS), and Q248.

This sequence belongs to the NAD kinase family. Homodimer. It depends on a divalent metal cation as a cofactor.

It is found in the cytoplasm. The enzyme catalyses NAD(+) + ATP = ADP + NADP(+) + H(+). Its function is as follows. Involved in the regulation of the intracellular balance of NAD and NADP, and is a key enzyme in the biosynthesis of NADP. Catalyzes specifically the phosphorylation on 2'-hydroxyl of the adenosine moiety of NAD to yield NADP. This chain is NAD kinase, found in Yersinia pestis.